The chain runs to 381 residues: Tafazzin (381 aa).

Topologically, residues 1–25 (MSFRDVLERGDEFLEAYPRRSPLWR) are mitochondrial intermembrane. Residues 26–47 (FLSYSTSLLTFGVSKLLLFTCY) lie within the membrane without spanning it. Topologically, residues 48-381 (NVKLNGFEKL…PEGKPKGKDD (334 aa)) are mitochondrial intermembrane. Positions 77-82 (HMSMVD) match the HXXXXD motif motif. The segment at 215 to 232 (LEATKPPIVVPIFATGFE) is required for membrane insertion.

This sequence belongs to the taffazin family.

Its subcellular location is the mitochondrion outer membrane. It localises to the mitochondrion inner membrane. It carries out the reaction 1'-[1,2-diacyl-sn-glycero-3-phospho],3'-[1-acyl-sn-glycero-3-phospho]-glycerol + a 1,2-diacyl-sn-glycero-3-phosphocholine = a cardiolipin + a 1-acyl-sn-glycero-3-phosphocholine. The catalysed reaction is 1,2-di-(9Z,12Z-octadecadienoyl)-sn-glycero-3-phosphocholine + 1'-[1,2-di-(9Z,12Z-octadecadienoyl)-sn-glycero-3-phospho]-3'-[1-(9Z,12Z-octadecadienoyl)-sn-glycero-3-phospho]-glycerol = 1-(9Z,12Z)-octadecadienoyl-sn-glycero-3-phosphocholine + 1',3'-bis-[1,2-di-(9Z,12Z-octadecadienoyl)-sn-glycero-3-phospho]-glycerol. It catalyses the reaction 1'-[1,2-di-(9Z-octadecenoyl)-sn-glycero-3-phospho]-3'-[1-(9Z-octadecenoyl)-2-hexadecanoyl-sn-glycero-3-phospho]-glycerol + 1-hexadecanoyl-sn-glycero-3-phosphocholine = 1'-[1,2-di-(9Z-octadecenoyl)-sn-glycero-3-phospho]-3'-[1-(9Z-octadecenoyl)-sn-glycero-3-phospho]-glycerol + 1,2-dihexadecanoyl-sn-glycero-3-phosphocholine. The enzyme catalyses 1'-[1,2-di-(9Z-octadecenoyl)-sn-glycero-3-phospho]-3'-[1-(9Z-octadecenoyl)-2-(9Z-hexadecenoyl)-sn-glycero-3-phospho]-glycerol + 1-(9Z-hexadecenoyl)-sn-glycero-3-phosphocholine = 1,2-di-(9Z-hexadecenoyl)-sn-glycero-3-phosphocholine + 1'-[1,2-di-(9Z-octadecenoyl)-sn-glycero-3-phospho]-3'-[1-(9Z-octadecenoyl)-sn-glycero-3-phospho]-glycerol. It carries out the reaction 1',3'-bis[1,2-di-(9Z-octadecenoyl)-sn-glycero-3-phospho]-glycerol + 1-(9Z-octadecenoyl)-sn-glycero-3-phosphocholine = 1'-[1,2-di-(9Z-octadecenoyl)-sn-glycero-3-phospho]-3'-[1-(9Z-octadecenoyl)-sn-glycero-3-phospho]-glycerol + 1,2-di-(9Z-octadecenoyl)-sn-glycero-3-phosphocholine. The catalysed reaction is 1'-[1,2-di-(9Z-octadecenoyl)-sn-glycero-3-phospho]-3'-[1-(9Z-octadecenoyl)-2-(9Z,12Z-octadecadienoyl)-sn-glycero-3-phospho]-glycerol + 1-(9Z,12Z)-octadecadienoyl-sn-glycero-3-phosphocholine = 1,2-di-(9Z,12Z-octadecadienoyl)-sn-glycero-3-phosphocholine + 1'-[1,2-di-(9Z-octadecenoyl)-sn-glycero-3-phospho]-3'-[1-(9Z-octadecenoyl)-sn-glycero-3-phospho]-glycerol. It catalyses the reaction 1'-[1,2-di-(9Z-octadecenoyl)-sn-glycero-3-phospho]-3'-[1-(9Z-octadecenoyl)-2-(9Z-hexadecenoyl)-sn-glycero-3-phospho]-glycerol + 1-hexadecanoyl-sn-glycero-3-phosphocholine = 1-hexadecanoyl-2-(9Z-hexadecenoyl)-sn-glycero-3-phosphocholine + 1'-[1,2-di-(9Z-octadecenoyl)-sn-glycero-3-phospho]-3'-[1-(9Z-octadecenoyl)-sn-glycero-3-phospho]-glycerol. The enzyme catalyses 1'-[1,2-di-(9Z-octadecenoyl)-sn-glycero-3-phospho]-3'-[1-(9Z-octadecenoyl)-2-hexadecanoyl-sn-glycero-3-phospho]-glycerol + 1-(9Z-hexadecenoyl)-sn-glycero-3-phosphocholine = 1-(9Z-hexadecenoyl)-2-hexadecanoyl-sn-glycero-3-phosphocholine + 1'-[1,2-di-(9Z-octadecenoyl)-sn-glycero-3-phospho]-3'-[1-(9Z-octadecenoyl)-sn-glycero-3-phospho]-glycerol. It carries out the reaction 2 1'-[1,2-diacyl-sn-glycero-3-phospho],3'-[1-acyl-sn-glycero-3-phospho]-glycerol = 1',3'-bis-[1-acyl-sn-glycero-3-phospho]-glycerol + a cardiolipin. The catalysed reaction is 2 1'-[1,2-di-(9Z-octadecenoyl)-sn-glycero-3-phospho]-3'-[1-(9Z-octadecenoyl)-sn-glycero-3-phospho]-glycerol = 1',3'-bis-[1-(9Z-octadecenoyl)-sn-glycero-3-phospho]-glycerol + 1',3'-bis[1,2-di-(9Z-octadecenoyl)-sn-glycero-3-phospho]-glycerol. It catalyses the reaction 1,2-di-(9Z-hexadecenoyl)-sn-glycero-3-phosphocholine + 1-hexadecanoyl-sn-glycero-3-phosphocholine = 1-hexadecanoyl-2-(9Z-hexadecenoyl)-sn-glycero-3-phosphocholine + 1-(9Z-hexadecenoyl)-sn-glycero-3-phosphocholine. The enzyme catalyses 1'-[1,2-di-(9Z,12Z-octadecadienoyl)-sn-glycero-3-phospho]-3'-[1-(9Z,12Z-octadecadienoyl)-sn-glycero-3-phospho]-glycerol + 1,2-di-(9Z-octadecenoyl)-sn-glycero-3-phosphocholine = 1'-[1,2-di-(9Z,12Z-octadecadienoyl)-sn-glycero-3-phospho]-3'-[1-(9Z,12Z-octadecadienoyl)-2-(9Z-octadecenoyl)-sn-glycero-3-phospho]-glycerol + 1-(9Z-octadecenoyl)-sn-glycero-3-phosphocholine. Its pathway is phospholipid metabolism. Its function is as follows. Acyltransferase required to remodel newly synthesized phospholipid cardiolipin (1',3'-bis-[1,2-diacyl-sn-glycero-3-phospho]-glycerol or CL), a key component of the mitochondrial inner membrane, with tissue specific acyl chains necessary for adequate mitochondrial function. Its role in cellular physiology is to improve mitochondrial performance. CL is critical for the coassembly of lipids and proteins in mitochondrial membranes, for instance, remodeling of the acyl groups of CL in the mitochondrial inner membrane affects the assembly and stability of respiratory chain complex IV and its supercomplex forms. Catalyzes the transacylation between phospholipids and lysophospholipids, with the highest rate being between phosphatidylcholine (1,2-diacyl-sn-glycero-3-phosphocholine or PC) and CL. Catalyzes both 1-acyl-sn-glycero-3-phosphocholine (lysophosphatidylcholine or LPC) reacylation and PC-CL transacylation, that means, it exchanges acyl groups between CL and PC by a combination of forward and reverse transacylations. Also catalyzes transacylations between other phospholipids such as phosphatidylethanolamine (1,2-diacyl-sn-glycero-3-phosphoethanolamine or PE) and CL, between PC and PE, and between PC and phosphatidate (1,2-diacyl-sn-glycero-3-phosphate or PA), although at lower rate. Not regiospecific, it transfers acyl groups into any of the sn-1 and sn-2 positions of the monolysocardiolipin (MLCL), which is an important prerequisite for uniformity and symmetry in CL acyl distribution. Cannot transacylate dilysocardiolipin (DLCL), thus, the role of MLCL is limited to that of an acyl acceptor. CoA-independent, it can reshuffle molecular species within a single phospholipid class. Redistributes fatty acids between MLCL, CL, and other lipids, which prolongs the half-life of CL. Its action is completely reversible, which allows for cyclic changes, such as fission and fusion or bending and flattening of the membrane. Hence, by contributing to the flexibility of the lipid composition, it plays an important role in the dynamics of mitochondria membranes. Essential for the final stage of spermatogenesis, spermatid individualization. Required for the initiation of mitophagy. The protein is Tafazzin (TAZ1) of Saccharomyces cerevisiae (strain ATCC 204508 / S288c) (Baker's yeast).